A 118-amino-acid polypeptide reads, in one-letter code: Ribonuclease P protein component (118 aa).

The protein belongs to the RnpA family. Consists of a catalytic RNA component (M1 or rnpB) and a protein subunit.

It catalyses the reaction Endonucleolytic cleavage of RNA, removing 5'-extranucleotides from tRNA precursor.. In terms of biological role, RNaseP catalyzes the removal of the 5'-leader sequence from pre-tRNA to produce the mature 5'-terminus. It can also cleave other RNA substrates such as 4.5S RNA. The protein component plays an auxiliary but essential role in vivo by binding to the 5'-leader sequence and broadening the substrate specificity of the ribozyme. This is Ribonuclease P protein component from Shewanella amazonensis (strain ATCC BAA-1098 / SB2B).